The following is a 213-amino-acid chain: Probable GTP-binding protein EngB (213 aa).

The EngB-type G domain maps to 25-203 (EGTEVAFAGR…EDVLNGWLLP (179 aa)). Residues 33-40 (GRSNAGKS), 60-64 (GRTQL), 80-83 (DLPG), 147-150 (TKAD), and 179-184 (AQMFSA) each bind GTP. Residues Ser-40 and Thr-62 each contribute to the Mg(2+) site.

Belongs to the TRAFAC class TrmE-Era-EngA-EngB-Septin-like GTPase superfamily. EngB GTPase family. It depends on Mg(2+) as a cofactor.

Functionally, necessary for normal cell division and for the maintenance of normal septation. This Saccharophagus degradans (strain 2-40 / ATCC 43961 / DSM 17024) protein is Probable GTP-binding protein EngB.